The following is a 162-amino-acid chain: Small ribosomal subunit protein uS19 (162 aa).

A compositionally biased stretch (basic residues) spans 1–27 (MAKQKKFSGKGSARSKRKQNRKQVGPR). Residues 1-29 (MAKQKKFSGKGSARSKRKQNRKQVGPRRR) form a disordered region.

The protein belongs to the universal ribosomal protein uS19 family.

Its function is as follows. Protein S19 forms a complex with S13 that binds strongly to the 16S ribosomal RNA. The chain is Small ribosomal subunit protein uS19 from Methanococcus aeolicus (strain ATCC BAA-1280 / DSM 17508 / OCM 812 / Nankai-3).